The following is a 220-amino-acid chain: Nucleolar protein 3 (220 aa).

Glycine 2 carries the N-myristoyl glycine lipid modification. The 92-residue stretch at 4-95 (VQERPSETID…MPDPAWDWQH (92 aa)) folds into the CARD domain. Residues 20-70 (VETLQADSGLLLDALVARGVLTGPEYEALDALPDAERRVRRLLLLVQSKGE) are essential for interaction with BAX. The tract at residues 111 to 220 (GHWTPEAPSS…FQEEDESEDS (110 aa)) is disordered. Residue threonine 149 is modified to Phosphothreonine; by CK2. Residues 152-220 (EPELEAEATE…FQEEDESEDS (69 aa)) show a composition bias toward acidic residues.

In terms of assembly, oligomerizes (via CARD doamin). Interacts (via CARD domain) with CASP2; inhibits CASP2 activity in a phosphorylation-dependent manner. Interacts with CASP8; decreases CASP8 activity in a mitochondria localization- and phosphorylation-dependent manner and this interaction is dissociated by calcium. Interacts with TFPT; translocates NOL3 into the nucleus and negatively regulated TFPT-induced cell death. Interacts directly (via CARD domain) with FAS and FADD (via DED domain); inhibits death-inducing signaling complex (DISC) assembly by inhibiting the increase in FAS-FADD binding induced by FAS activation. Interacts (via CARD domain) with BAX (via a C-terminal 33 residues); inhibits BAX activation and translocation and consequently cytochrome c release from mitochondria. Interacts with PPM1G; may dephosphorylate NOL3. Interacts (via CARD domain) with BBC3 (via BH3 domain); preventing the association of BBC3 with BCL2 and resulting in activation of CASP8. Interacts (via CARD domain) with BAD(via BH3 domain); preventing the association of BAD with BCL2. Interacts directly (via CARD domain) with TNFRSF1A; inhibits TNF-signaling pathway. Post-translationally, phosphorylation at Thr-149 is required for its antiapoptotic effect by blocking death-inducing signaling complex death-inducing signaling complex (DISC) activity through the control of interaction with CASP8. Phosphorylation at Thr-149 results in translocation to mitochondria and this translocation enables the binding to CASP8. Dephosphorylated at Thr-149 by calcineurin; doesn't inhibit the association between FADD and CASP8 and the consequent apoptosis. In terms of processing, polyubiquitinated by MDM2; promoting proteasomal-dependent degradation in response to apoptotic stimuli.

The protein resides in the cytoplasm. The protein localises to the mitochondrion. It localises to the sarcoplasmic reticulum. Its subcellular location is the membrane. Functionally, apoptosis repressor that blocks multiple modes of cell death. Inhibits extrinsic apoptotic pathways through two different ways. Firstly by interacting with FAS and FADD upon FAS activation blocking death-inducing signaling complex (DISC) assembly. Secondly by interacting with CASP8 in a mitochondria localization- and phosphorylation-dependent manner, limiting the amount of soluble CASP8 available for DISC-mediated activation. Inhibits intrinsic apoptotic pathway in response to a wide range of stresses, through its interaction with BAX resulting in BAX inactivation, preventing mitochondrial dysfunction and release of pro-apoptotic factors. Inhibits calcium-mediated cell death by functioning as a cytosolic calcium buffer, dissociating its interaction with CASP8 and maintaining calcium homeostasis. Negatively regulates oxidative stress-induced apoptosis by phosphorylation-dependent suppression of the mitochondria-mediated intrinsic pathway, by blocking CASP2 activation and BAX translocation. Negatively regulates hypoxia-induced apoptosis in part by inhibiting the release of cytochrome c from mitochondria in a caspase-independent manner. Also inhibits TNF-induced necrosis by preventing TNF-signaling pathway through TNFRSF1A interaction abrogating the recruitment of RIPK1 to complex I. Finally through its role as apoptosis repressor, promotes vascular remodeling through inhibition of apoptosis and stimulation of proliferation, in response to hypoxia. Inhibits too myoblast differentiation through caspase inhibition. The polypeptide is Nucleolar protein 3 (Nol3) (Mus musculus (Mouse)).